The sequence spans 200 residues: NADH-quinone oxidoreductase subunit C (200 aa).

The protein belongs to the complex I 30 kDa subunit family. As to quaternary structure, NDH-1 is composed of 14 different subunits. Subunits NuoB, C, D, E, F, and G constitute the peripheral sector of the complex.

Its subcellular location is the cell inner membrane. It catalyses the reaction a quinone + NADH + 5 H(+)(in) = a quinol + NAD(+) + 4 H(+)(out). Its function is as follows. NDH-1 shuttles electrons from NADH, via FMN and iron-sulfur (Fe-S) centers, to quinones in the respiratory chain. The immediate electron acceptor for the enzyme in this species is believed to be ubiquinone. Couples the redox reaction to proton translocation (for every two electrons transferred, four hydrogen ions are translocated across the cytoplasmic membrane), and thus conserves the redox energy in a proton gradient. This Ralstonia pickettii (strain 12J) protein is NADH-quinone oxidoreductase subunit C.